A 93-amino-acid chain; its full sequence is Pyrimidine/purine nucleoside phosphorylase (93 aa).

This sequence belongs to the nucleoside phosphorylase PpnP family.

It carries out the reaction a purine D-ribonucleoside + phosphate = a purine nucleobase + alpha-D-ribose 1-phosphate. It catalyses the reaction adenosine + phosphate = alpha-D-ribose 1-phosphate + adenine. The catalysed reaction is cytidine + phosphate = cytosine + alpha-D-ribose 1-phosphate. The enzyme catalyses guanosine + phosphate = alpha-D-ribose 1-phosphate + guanine. It carries out the reaction inosine + phosphate = alpha-D-ribose 1-phosphate + hypoxanthine. It catalyses the reaction thymidine + phosphate = 2-deoxy-alpha-D-ribose 1-phosphate + thymine. The catalysed reaction is uridine + phosphate = alpha-D-ribose 1-phosphate + uracil. The enzyme catalyses xanthosine + phosphate = alpha-D-ribose 1-phosphate + xanthine. Functionally, catalyzes the phosphorolysis of diverse nucleosides, yielding D-ribose 1-phosphate and the respective free bases. Can use uridine, adenosine, guanosine, cytidine, thymidine, inosine and xanthosine as substrates. Also catalyzes the reverse reactions. The protein is Pyrimidine/purine nucleoside phosphorylase of Sorangium cellulosum (strain So ce56) (Polyangium cellulosum (strain So ce56)).